Reading from the N-terminus, the 828-residue chain is MKQRSICPGRLSTAIAVALCCFPPFSSGQESPGTIYQFNDGFIVGSREKVDPSRFSTSAISEGVYSLDVYTNGEWKGRYDLKITAGKDGKMGVCYTKAMLMQYGISPEKLNPQLSEKEGFCGRLQEWRHEDNVKDTLIQSSLRLDIAVPQIYEDQRLKNFVSPQFWDKGVAALNLGWMANAWNSHISSANGSDNSSAYLGVNAGLSWDGWLLKHIGNLNWQQQQGKAHWNSNQTYLQRPIPQINSIVSGGQIFTNGEFFDTIGLRGVNLATDDNMFPDGMRSYAPEIRDVAQSNALATVRQGSNIIYQTTVPPGPFTLQDVYPSGYGSDLEVSVKEGDGSVEVFSVPYASVAQLLRPGMTRYALSAGKVDDSSLRNKPMLYQGTWQHGLNNLFTGYTGVTGFDDYQAFLLGTGMNTGIGALSFDVTHTRLKSDTLDEHGQSYRATFNRMFTETQTSIVLAAYRYSTKGYYNLNDALYAVDQEKNYNSNYTVWRQKNGMTFTVNQNLPDGWGGFYLCGRVADYWNRSGTEKQYQFSYNNMYGRLSWSVDAQRVYTPDSSGHRRDDRVSLNFSYPLWFGENRTANLTSNTAFNNSRFASSQIGVNGSLDSENNLNYGVSTTTATGRQHDVALNGSYRTPWTTLNGSYSQGEGYRQSGVGASGTLIAHQHGVVFSPETGPTMALIEAKDAAGVMLPGSPGTRIDSNGYAILPYLRPYRINSVEIDPKGSNDDVAFGSTVAQVVPWEGSVVKVSFDTTLQNNITLRARQANGLPLPFAATIFGPSGKEIGVVGQGSMMFISDASAPKATVKWSGGQCSVELSQEKTKETLCR.

A signal peptide spans 1–18 (MKQRSICPGRLSTAIAVA). C813 and C827 are oxidised to a cystine.

The protein belongs to the fimbrial export usher family.

Its subcellular location is the cell outer membrane. In terms of biological role, involved in the export and assembly of the type 3 fimbrial subunit (MrkA). This is Outer membrane usher protein MrkC (mrkC) from Klebsiella pneumoniae.